The primary structure comprises 252 residues: Imidazole glycerol phosphate synthase subunit HisF (252 aa).

Residues D11 and D130 contribute to the active site.

This sequence belongs to the HisA/HisF family. Heterodimer of HisH and HisF.

It localises to the cytoplasm. The enzyme catalyses 5-[(5-phospho-1-deoxy-D-ribulos-1-ylimino)methylamino]-1-(5-phospho-beta-D-ribosyl)imidazole-4-carboxamide + L-glutamine = D-erythro-1-(imidazol-4-yl)glycerol 3-phosphate + 5-amino-1-(5-phospho-beta-D-ribosyl)imidazole-4-carboxamide + L-glutamate + H(+). Its pathway is amino-acid biosynthesis; L-histidine biosynthesis; L-histidine from 5-phospho-alpha-D-ribose 1-diphosphate: step 5/9. Its function is as follows. IGPS catalyzes the conversion of PRFAR and glutamine to IGP, AICAR and glutamate. The HisF subunit catalyzes the cyclization activity that produces IGP and AICAR from PRFAR using the ammonia provided by the HisH subunit. This chain is Imidazole glycerol phosphate synthase subunit HisF, found in Bacillus cereus (strain G9842).